Consider the following 2203-residue polypeptide: Genome polyprotein (2203 aa).

Gly-2 carries N-myristoyl glycine; by host lipidation. The Cytoplasmic segment spans residues 2 to 1513; it reads GAQVSTQKTG…HVSRAFICLQ (1512 aa). The tract at residues 567 to 583 is amphipathic alpha-helix; it reads ELQNDVRQAVEGAIGRV. Residues His-890 and Asp-908 each act as for protease 2A activity in the active site. Zn(2+) contacts are provided by Cys-925 and Cys-927. The active-site For protease 2A activity is Cys-979. Residues Cys-985 and His-987 each coordinate Zn(2+). The membrane-binding stretch occupies residues 1119–1191; the sequence is SNGWLKKFTE…EQSAPSQSDQ (73 aa). The interval 1119-1257 is oligomerization; it reads SNGWLKKFTE…SPGAGKSVAT (139 aa). Positions 1140-1144 are RNA-binding; it reads AVKIQ. The SF3 helicase domain maps to 1223 to 1379; sequence EKKMSNYIQF…SMYSQNGKIN (157 aa). Zn(2+) contacts are provided by Cys-1387, Cys-1399, and Cys-1404. The C4-type; degenerate zinc-finger motif lies at 1387–1404; that stretch reads CDEECCPVNFKRCCPLVC. The interval 1431–1438 is RNA-binding; that stretch reads EYNHRHSV. The segment at 1442 to 1447 is oligomerization; the sequence is LEALFQ. The stretch at 1514–1529 is an intramembrane region; it reads ALTTFVSVAGIIYIIY. Over 1530–2203 the chain is Cytoplasmic; it reads KLFAGFQGAY…TLRRKWLDSF (674 aa). The residue at position 1539 (Tyr-1539) is an O-(5'-phospho-RNA)-tyrosine. The region spanning 1559 to 1737 is the Peptidase C3 domain; it reads GPAFEFAVAM…FSAALLRHYF (179 aa). Catalysis depends on for protease 3C activity residues His-1598, Glu-1629, and Cys-1705. Residues 1968 to 2084 form the RdRp catalytic domain; that stretch reads GHLIAFDYSG…SYPWPIDASL (117 aa). Residues Asp-1974 and Asp-2070 each contribute to the Mg(2+) site.

The protein belongs to the picornaviruses polyprotein family. In terms of assembly, interacts with capsid protein VP1 and capsid protein VP3 to form heterotrimeric protomers. Interacts with capsid protein VP0, and capsid protein VP3 to form heterotrimeric protomers. Five protomers subsequently associate to form pentamers which serve as building blocks for the capsid. Interacts with capsid protein VP2, capsid protein VP3 and capsid protein VP4 following cleavage of capsid protein VP0. As to quaternary structure, interacts with capsid protein VP1 and capsid protein VP3 in the mature capsid. In terms of assembly, interacts with capsid protein VP0 and capsid protein VP1 to form heterotrimeric protomers. Five protomers subsequently associate to form pentamers which serve as building blocks for the capsid. Interacts with capsid protein VP4 in the mature capsid. Interacts with protein 2C; this interaction may be important for virion morphogenesis. Interacts with capsid protein VP1 and capsid protein VP3. As to quaternary structure, homodimer. In terms of assembly, homohexamer; forms a hexameric ring structure with 6-fold symmetry characteristic of AAA+ ATPases. Interacts (via N-terminus) with host RTN3 (via reticulon domain); this interaction is important for viral replication. Interacts with capsid protein VP3; this interaction may be important for virion morphogenesis. Interacts with protein 3CD. As to quaternary structure, homodimer. Interacts with host GBF1. Interacts (via GOLD domain) with host ACBD3 (via GOLD domain); this interaction allows the formation of a viral protein 3A/ACBD3 heterotetramer with a 2:2 stoichiometry, which will stimulate the recruitment of host PI4KB in order to synthesize PI4P at the viral RNA replication sites. In terms of assembly, interacts with RNA-directed RNA polymerase. Interacts with protein 3AB and with RNA-directed RNA polymerase. As to quaternary structure, interacts with Viral protein genome-linked and with protein 3CD. Mg(2+) serves as cofactor. In terms of processing, specific enzymatic cleavages in vivo by the viral proteases yield processing intermediates and the mature proteins. Myristoylation is required for the formation of pentamers during virus assembly. Further assembly of 12 pentamers and a molecule of genomic RNA generates the provirion. Post-translationally, during virion maturation, immature virions are rendered infectious following cleavage of VP0 into VP4 and VP2. This maturation seems to be an autocatalytic event triggered by the presence of RNA in the capsid and it is followed by a conformational change infectious virion. In terms of processing, myristoylation is required during RNA encapsidation and formation of the mature virus particle. VPg is uridylylated by the polymerase into VPg-pUpU. This acts as a nucleotide-peptide primer for the genomic RNA replication.

The protein resides in the virion. It is found in the host cytoplasm. The protein localises to the host cytoplasmic vesicle membrane. Its subcellular location is the host nucleus. The enzyme catalyses a ribonucleoside 5'-triphosphate + H2O = a ribonucleoside 5'-diphosphate + phosphate + H(+). The catalysed reaction is Selective cleavage of Tyr-|-Gly bond in the picornavirus polyprotein.. It catalyses the reaction RNA(n) + a ribonucleoside 5'-triphosphate = RNA(n+1) + diphosphate. It carries out the reaction Selective cleavage of Gln-|-Gly bond in the poliovirus polyprotein. In other picornavirus reactions Glu may be substituted for Gln, and Ser or Thr for Gly.. With respect to regulation, replication or transcription is subject to high level of random mutations by the nucleotide analog ribavirin. Its function is as follows. Forms an icosahedral capsid of pseudo T=3 symmetry with capsid proteins VP2 and VP3. The capsid is 300 Angstroms in diameter, composed of 60 copies of each capsid protein and enclosing the viral positive strand RNA genome. Capsid protein VP1 mainly forms the vertices of the capsid. Capsid protein VP1 interacts with host cell receptor to provide virion attachment to target host cells. This attachment induces virion internalization. Tyrosine kinases are probably involved in the entry process. After binding to its receptor, the capsid undergoes conformational changes. Capsid protein VP1 N-terminus (that contains an amphipathic alpha-helix) and capsid protein VP4 are externalized. Together, they shape a pore in the host membrane through which viral genome is translocated to host cell cytoplasm. Functionally, forms an icosahedral capsid of pseudo T=3 symmetry with capsid proteins VP2 and VP3. The capsid is 300 Angstroms in diameter, composed of 60 copies of each capsid protein and enclosing the viral positive strand RNA genome. Lies on the inner surface of the capsid shell. After binding to the host receptor, the capsid undergoes conformational changes. Capsid protein VP4 is released, Capsid protein VP1 N-terminus is externalized, and together, they shape a pore in the host membrane through which the viral genome is translocated into the host cell cytoplasm. In terms of biological role, component of immature procapsids, which is cleaved into capsid proteins VP4 and VP2 after maturation. Allows the capsid to remain inactive before the maturation step. Its function is as follows. Cysteine protease that cleaves viral polyprotein and specific host proteins. It is responsible for the autocatalytic cleavage between the P1 and P2 regions, which is the first cleavage occurring in the polyprotein. Also cleaves the host translation initiation factor EIF4G1, in order to shut down the capped cellular mRNA translation. Inhibits the host nucleus-cytoplasm protein and RNA trafficking by cleaving host members of the nuclear pores. Counteracts stress granule formation probably by antagonizing its assembly or promoting its dissassembly. Functionally, plays an essential role in the virus replication cycle by acting as a viroporin. Creates a pore in the host endoplasmic reticulum and as a consequence releases Ca2+ in the cytoplasm of infected cell. In turn, high levels of cytoplasmic calcium may trigger membrane trafficking and transport of viral ER-associated proteins to viroplasms, sites of viral genome replication. Induces and associates with structural rearrangements of intracellular membranes. Displays RNA-binding, nucleotide binding and NTPase activities. May play a role in virion morphogenesis and viral RNA encapsidation by interacting with the capsid protein VP3. In terms of biological role, localizes the viral replication complex to the surface of membranous vesicles. Together with protein 3CD binds the Cis-Active RNA Element (CRE) which is involved in RNA synthesis initiation. Acts as a cofactor to stimulate the activity of 3D polymerase, maybe through a nucleid acid chaperone activity. Its function is as follows. Localizes the viral replication complex to the surface of membranous vesicles. It inhibits host cell endoplasmic reticulum-to-Golgi apparatus transport and causes the disassembly of the Golgi complex, possibly through GBF1 interaction. This would result in depletion of MHC, trail receptors and IFN receptors at the host cell surface. Plays an essential role in viral RNA replication by recruiting ACBD3 and PI4KB at the viral replication sites, thereby allowing the formation of the rearranged membranous structures where viral replication takes place. Functionally, acts as a primer for viral RNA replication and remains covalently bound to viral genomic RNA. VPg is uridylylated prior to priming replication into VPg-pUpU. The oriI viral genomic sequence may act as a template for this. The VPg-pUpU is then used as primer on the genomic RNA poly(A) by the RNA-dependent RNA polymerase to replicate the viral genome. During genome replication, the VPg-RNA linkage is removed by the host TDP2, thereby accelerating replication. During the late stage of the replication cycle, host TDP2 is excluded from sites of viral RNA synthesis and encapsidation, allowing for the generation of progeny virions. Involved in the viral replication complex and viral polypeptide maturation. It exhibits protease activity with a specificity and catalytic efficiency that is different from protease 3C. Protein 3CD lacks polymerase activity. Protein 3CD binds to the 5'UTR of the viral genome. In terms of biological role, replicates the viral genomic RNA on the surface of intracellular membranes. May form linear arrays of subunits that propagate along a strong head-to-tail interaction called interface-I. Covalently attaches UMP to a tyrosine of VPg, which is used to prime RNA synthesis. The positive stranded RNA genome is first replicated at virus induced membranous vesicles, creating a dsRNA genomic replication form. This dsRNA is then used as template to synthesize positive stranded RNA genomes. ss(+)RNA genomes are either translated, replicated or encapsidated. Its function is as follows. Major viral protease that mediates proteolytic processing of the polyprotein. Cleaves host EIF5B, contributing to host translation shutoff. Also cleaves host PABPC1, contributing to host translation shutoff. Cleaves host NLRP1, triggers host N-glycine-mediated degradation of the autoinhibitory NLRP1 N-terminal fragment. The polypeptide is Genome polyprotein (Echovirus 9 (strain Barty)).